Reading from the N-terminus, the 77-residue chain is Large ribosomal subunit protein uL29 (77 aa).

The protein belongs to the universal ribosomal protein uL29 family.

The chain is Large ribosomal subunit protein uL29 from Mycolicibacterium vanbaalenii (strain DSM 7251 / JCM 13017 / BCRC 16820 / KCTC 9966 / NRRL B-24157 / PYR-1) (Mycobacterium vanbaalenii).